The following is a 538-amino-acid chain: Nectin-2 (538 aa).

The N-terminal stretch at 1 to 31 is a signal peptide; the sequence is MARAAALLPSRSPPTPLLWPLLLLLLLETGA. An Ig-like V-type domain is found at 32–156; that stretch reads QDVRVQVLPE…KGSVRGMTWL (125 aa). The Extracellular portion of the chain corresponds to 32–360; that stretch reads QDVRVQVLPE…NTAGAGATGG (329 aa). Intrachain disulfides connect Cys-54–Cys-140, Cys-183–Cys-238, and Cys-283–Cys-329. The N-linked (GlcNAc...) asparagine glycan is linked to Asn-137. Ig-like C2-type domains follow at residues 162–256 and 261–345; these read PKNQ…VTLS and PEVS…QVIF. The N-linked (GlcNAc...) asparagine glycan is linked to Asn-324. A helical membrane pass occupies residues 361 to 381; the sequence is IIGGIIAAIIATAVAATGILI. The Cytoplasmic segment spans residues 382–538; that stretch reads CRQQRKEQTL…GFVMSRAMYV (157 aa). Positions 390 to 414 are disordered; sequence TLQGAEEDEDLEGPPSYKPPTPKAK. Thr-410 bears the Phosphothreonine mark. Phosphoserine is present on residues Ser-433, Gly-465, and Gly-470. A disordered region spans residues 462–489; that stretch reads ERSGPLHPGATSLGSPIPVPPGPPAVED.

This sequence belongs to the nectin family. In terms of assembly, can form trans-heterodimers with NECTIN3. Interacts with CD226 or with PVRIG; these interactions are competitive and have a differential functional outcome on T-cell activation, either positive or negative, respectively. Binds with low affinity to TIGIT. (Microbial infection) Interacts with herpes simplex virus 1 (HHV-1) mutant Rid1, herpes simplex virus 1 (HHV-2) and pseudorabies virus (PRV) envelope glycoprotein D. As to expression, ubiquitous.

The protein resides in the cell membrane. Its function is as follows. Modulator of T-cell signaling. Can be either a costimulator of T-cell function, or a coinhibitor, depending on the receptor it binds to. Upon binding to CD226, stimulates T-cell proliferation and cytokine production, including that of IL2, IL5, IL10, IL13, and IFNG. Upon interaction with PVRIG, inhibits T-cell proliferation. These interactions are competitive. Probable cell adhesion protein. (Microbial infection) Acts as a receptor for herpes simplex virus 1 (HHV-1) mutant Rid1, herpes simplex virus 1 (HHV-2) and pseudorabies virus (PRV). In Homo sapiens (Human), this protein is Nectin-2.